A 104-amino-acid polypeptide reads, in one-letter code: MIKLKIKTGDIVRVIAGDHKGAEGKVVKVDREKNKAIVEGVNMVSKHTKPSAKSPQGGIVKKEAPIQISNVSLIDPKTKEATRVGIRVEGDKKVRFSKKSNQVL.

Belongs to the universal ribosomal protein uL24 family. In terms of assembly, part of the 50S ribosomal subunit.

One of two assembly initiator proteins, it binds directly to the 5'-end of the 23S rRNA, where it nucleates assembly of the 50S subunit. Functionally, one of the proteins that surrounds the polypeptide exit tunnel on the outside of the subunit. The chain is Large ribosomal subunit protein uL24 from Flavobacterium psychrophilum (strain ATCC 49511 / DSM 21280 / CIP 103535 / JIP02/86).